The chain runs to 59 residues: Large ribosomal subunit protein bL32 (59 aa).

A disordered region spans residues 1 to 25; the sequence is MAVQQNKKSPSKRGMHRAHDFLTAP.

This sequence belongs to the bacterial ribosomal protein bL32 family.

The polypeptide is Large ribosomal subunit protein bL32 (Azoarcus sp. (strain BH72)).